The sequence spans 78 residues: Putative membrane protein insertion efficiency factor (78 aa).

Belongs to the UPF0161 family.

Its subcellular location is the cell inner membrane. Its function is as follows. Could be involved in insertion of integral membrane proteins into the membrane. The polypeptide is Putative membrane protein insertion efficiency factor (Prochlorococcus marinus (strain MIT 9312)).